An 84-amino-acid chain; its full sequence is Small ribosomal subunit protein uS17 (84 aa).

It belongs to the universal ribosomal protein uS17 family. In terms of assembly, part of the 30S ribosomal subunit.

Its function is as follows. One of the primary rRNA binding proteins, it binds specifically to the 5'-end of 16S ribosomal RNA. This Nitrosomonas europaea (strain ATCC 19718 / CIP 103999 / KCTC 2705 / NBRC 14298) protein is Small ribosomal subunit protein uS17.